The primary structure comprises 475 residues: Neuronal acetylcholine receptor subunit alpha-5 (475 aa).

The N-terminal stretch at Met1–Gly29 is a signal peptide. At Arg30–Thr261 the chain is on the extracellular side. Residues Cys177 and Cys191 are joined by a disulfide bond. Residues Asn190 and Asn236 are each glycosylated (N-linked (GlcNAc...) asparagine). Cysteines 241 and 242 form a disulfide. A run of 3 helical transmembrane segments spans residues Leu262 to Pro282, Ile289 to Ile309, and Leu324 to Ile344. Topologically, residues His345–Met437 are cytoplasmic. The chain crosses the membrane as a helical span at residues Phe438–Ile458. At Tyr459–Lys475 the chain is on the extracellular side.

It belongs to the ligand-gated ion channel (TC 1.A.9) family. Acetylcholine receptor (TC 1.A.9.1) subfamily. Alpha-5/CHRNA5 sub-subfamily. As to quaternary structure, neuronal AChR that forms heteropentamers composed of two different type of subunits: alpha and non-alpha (beta). CHRNA5/alpha-5 subunit is only able to form functional nAChRs when co-assembled with another alpha subunit, can be combined to CHRNA4/alpha-4 or CHRNA3/alpha-3 and CHRNB4/beta-4 or CHRNB2/beta-2 to give rise to functional receptors. Interacts with LYPD6.

The protein resides in the synaptic cell membrane. The protein localises to the cell membrane. It catalyses the reaction Ca(2+)(in) = Ca(2+)(out). It carries out the reaction K(+)(in) = K(+)(out). The catalysed reaction is Na(+)(in) = Na(+)(out). Its activity is regulated as follows. Activated by a myriad of ligands such as acetylcholine, cytisine, nicotine, choline and epibatidine. Functionally, component of neuronal acetylcholine receptors (nAChRs) that function as pentameric, ligand-gated cation channels with high calcium permeability among other activities. nAChRs are excitatory neurotrasnmitter receptors formed by a collection of nAChR subunits known to mediate synaptic transmission in the nervous system and the neuromuscular junction. Each nAchR subunit confers differential attributes to channel properties, including activation, deactivation and desensitization kinetics, pH sensitivity, cation permeability, and binding to allosteric modulators. Has an accessory rather than functional role and is only able to form functional nAChRs when co-assembled with another beta subunit. Participates in pentameric assemblies along with CHRNA3, CHRNA4, CHRNB2 and CHRNB4. Increases receptor sensitivity to acetylcholine and nicotine when associated with CHRNA4 and CHRNB2. Plays a role in nicotine addiction. In Bos taurus (Bovine), this protein is Neuronal acetylcholine receptor subunit alpha-5 (CHRNA5).